Here is a 133-residue protein sequence, read N- to C-terminus: MGVWHGRSLRKPTGGRIRPHRKKRKFEMGNPPTETLVGEERKLKERRGMGGNVKKGLKFATHANVADPETGEVKCVRIEEVVKNPASQYYERHGVITKGAIIRTEIGLAKVTNRPGQEPVVNAVLIKEEEEEG.

A disordered region spans residues 1–34; sequence MGVWHGRSLRKPTGGRIRPHRKKRKFEMGNPPTE.

Belongs to the eukaryotic ribosomal protein eS8 family. In terms of assembly, part of the 30S ribosomal subunit.

In Methanopyrus kandleri (strain AV19 / DSM 6324 / JCM 9639 / NBRC 100938), this protein is Small ribosomal subunit protein eS8.